Consider the following 201-residue polypeptide: Thymidylate kinase (201 aa).

Residue 7 to 14 coordinates ATP; that stretch reads GGEGSGKT.

The protein belongs to the thymidylate kinase family.

The enzyme catalyses dTMP + ATP = dTDP + ADP. In terms of biological role, phosphorylation of dTMP to form dTDP in both de novo and salvage pathways of dTTP synthesis. In Acholeplasma laidlawii (strain PG-8A), this protein is Thymidylate kinase.